A 256-amino-acid chain; its full sequence is MNNIWWQTKGQGNVHLVLLHGWGLNAEVWRCIDEELSSHFTLHLVDLPGFGRSQGFGALSLADMAEAVLQQAPDKAIWLGWSLGGLVASQIALTHPERVQALVTVASSPCFSARDDWPGIKPDVLAGFQQQLSDDFQRTVERFLALQTMGTETARQDARALKKTVLALPMPEVDVLNGGLEILKTVDLRQPLQNVPMPFLRLYGYLDGLVPRKVVPMLDKLWPRSKSYIFAKAAHAPFISHPVEFCHLLVALKQRV.

The AB hydrolase-1 domain occupies 15–242; the sequence is HLVLLHGWGL…AAHAPFISHP (228 aa). Residues tryptophan 22, 82-83, and 143-147 each bind substrate; these read SL and FLALQ. Serine 82 acts as the Nucleophile in catalysis. Catalysis depends on residues aspartate 207 and histidine 235. Histidine 235 is a substrate binding site.

It belongs to the AB hydrolase superfamily. Carboxylesterase BioH family. Monomer.

It localises to the cytoplasm. The enzyme catalyses 6-carboxyhexanoyl-[ACP] methyl ester + H2O = 6-carboxyhexanoyl-[ACP] + methanol + H(+). The protein operates within cofactor biosynthesis; biotin biosynthesis. Functionally, the physiological role of BioH is to remove the methyl group introduced by BioC when the pimeloyl moiety is complete. It allows to synthesize pimeloyl-ACP via the fatty acid synthetic pathway through the hydrolysis of the ester bonds of pimeloyl-ACP esters. The protein is Pimeloyl-[acyl-carrier protein] methyl ester esterase of Shigella boydii serotype 18 (strain CDC 3083-94 / BS512).